We begin with the raw amino-acid sequence, 46 residues long: Aspartate aminotransferase 1 (46 aa).

This sequence belongs to the class-I pyridoxal-phosphate-dependent aminotransferase family. As to quaternary structure, homodimer. Pyridoxal 5'-phosphate is required as a cofactor.

It catalyses the reaction L-aspartate + 2-oxoglutarate = oxaloacetate + L-glutamate. Important for the metabolism of amino acids and Krebs-cycle related organic acids. In plants, it is involved in nitrogen metabolism and in aspects of carbon and energy metabolism. The sequence is that of Aspartate aminotransferase 1 from Pseudotsuga menziesii (Douglas-fir).